The chain runs to 458 residues: Ribulose bisphosphate carboxylase (458 aa).

Asn-111 contributes to the substrate binding site. Lys-166 functions as the Proton acceptor in the catalytic mechanism. Position 168 (Lys-168) interacts with substrate. Mg(2+) contacts are provided by Lys-191, Asp-193, and Glu-194. Lys-191 is subject to N6-carboxylysine. His-287 (proton acceptor) is an active-site residue. Residues Arg-288, His-321, and Ser-368 each coordinate substrate.

This sequence belongs to the RuBisCO large chain family. Type II subfamily. Homodimer. Requires Mg(2+) as cofactor.

The enzyme catalyses 2 (2R)-3-phosphoglycerate + 2 H(+) = D-ribulose 1,5-bisphosphate + CO2 + H2O. It catalyses the reaction D-ribulose 1,5-bisphosphate + O2 = 2-phosphoglycolate + (2R)-3-phosphoglycerate + 2 H(+). In terms of biological role, ruBisCO catalyzes two reactions: the carboxylation of D-ribulose 1,5-bisphosphate, the primary event in carbon dioxide fixation, as well as the oxidative fragmentation of the pentose substrate. Both reactions occur simultaneously and in competition at the same active site. The chain is Ribulose bisphosphate carboxylase (cbbM) from Rhodobacter capsulatus (strain ATCC BAA-309 / NBRC 16581 / SB1003).